An 896-amino-acid chain; its full sequence is Translation initiation factor IF-2 (896 aa).

2 stretches are compositionally biased toward basic and acidic residues: residues 94–159 and 166–219; these read KRDP…KDKV and DMTK…EKNW. Positions 94 to 307 are disordered; the sequence is KRDPQEAERL…GSALQQGFQK (214 aa). The span at 256–271 shows a compositional bias: basic residues; it reads GRGRNAKAARPAKKGN. Over residues 272 to 285 the composition is skewed to basic and acidic residues; that stretch reads KHAESKADREEARA. A tr-type G domain is found at 395–564; sequence PRAPVVTIMG…LLQAEVLELK (170 aa). A G1 region spans residues 404–411; that stretch reads GHVDHGKT. Residue 404 to 411 participates in GTP binding; the sequence is GHVDHGKT. The interval 429 to 433 is G2; it reads GITQH. The interval 450 to 453 is G3; that stretch reads DTPG. Residues 450–454 and 504–507 contribute to the GTP site; these read DTPGH and NKID. The tract at residues 504-507 is G4; that stretch reads NKID. The interval 540 to 542 is G5; sequence SAK.

It belongs to the TRAFAC class translation factor GTPase superfamily. Classic translation factor GTPase family. IF-2 subfamily.

It is found in the cytoplasm. Its function is as follows. One of the essential components for the initiation of protein synthesis. Protects formylmethionyl-tRNA from spontaneous hydrolysis and promotes its binding to the 30S ribosomal subunits. Also involved in the hydrolysis of GTP during the formation of the 70S ribosomal complex. The sequence is that of Translation initiation factor IF-2 (infB) from Klebsiella oxytoca.